The chain runs to 211 residues: Uracil phosphoribosyltransferase (211 aa).

5-phospho-alpha-D-ribose 1-diphosphate-binding positions include Arg-78, Arg-103, and 130-138 (DPMLATGGT). Uracil is bound by residues Ile-195 and 200–202 (GDA). Residue Asp-201 participates in 5-phospho-alpha-D-ribose 1-diphosphate binding.

This sequence belongs to the UPRTase family. The cofactor is Mg(2+).

The catalysed reaction is UMP + diphosphate = 5-phospho-alpha-D-ribose 1-diphosphate + uracil. It functions in the pathway pyrimidine metabolism; UMP biosynthesis via salvage pathway; UMP from uracil: step 1/1. With respect to regulation, allosterically activated by GTP. Its function is as follows. Catalyzes the conversion of uracil and 5-phospho-alpha-D-ribose 1-diphosphate (PRPP) to UMP and diphosphate. In Paenarthrobacter aurescens (strain TC1), this protein is Uracil phosphoribosyltransferase.